The sequence spans 145 residues: Protein ImpA (145 aa).

Residues Ser-64 and Lys-101 each act as for autocatalytic cleavage activity in the active site.

It belongs to the peptidase S24 family.

Its function is as follows. Involved in UV protection and mutation. This Escherichia coli protein is Protein ImpA.